The chain runs to 197 residues: MSRYRGPRFKKIRRLGALPGLTNKSPRAIRDLRNQSRSEYRIRLEEKQKLRFHYGLTEKQLINYVQIARKAKGSTGKVLLQLLEMRLDNILFRLGMASTIPAARQLVNHRHVLVNGRLVDRPSYRCKPRDIIMPKNTTKSGVLVQNSLELFTGKELANHLNLFSTPYKGLVNKIVDTNWIGLKINELLVVEYYSRQA.

The S4 RNA-binding domain occupies 85-161 (MRLDNILFRL…TGKELANHLN (77 aa)).

Belongs to the universal ribosomal protein uS4 family. As to quaternary structure, part of the 30S ribosomal subunit. Contacts protein S5. The interaction surface between S4 and S5 is involved in control of translational fidelity.

It localises to the plastid. Its function is as follows. One of the primary rRNA binding proteins, it binds directly to 16S rRNA where it nucleates assembly of the body of the 30S subunit. Functionally, with S5 and S12 plays an important role in translational accuracy. This is Small ribosomal subunit protein uS4c (rps4) from Cuscuta obtusiflora (Peruvian dodder).